A 367-amino-acid polypeptide reads, in one-letter code: MVPTEATSLILNPSDDYGYDGTPPMEYDTNLTDYFCEKSHVRQFAGHFLPPLYWLVFIVGAVGNSLVILVYWYCTRVKTMTDMFLLNLAIADLLFLTTLPFWAIAAADQWKFQTFMCKVVNSMYKMNFYSCVLLIMCISVDRYIAIAQAMRAQMWRQKRLLYSKMVCFTIWVMAAALCLPELLYSQVKEEHGTAICTVVYSSNESTKLKSAVLTLKVTLGFFLPFVVMACCYAIIIHTLIRAKKSSKHKALKVTITVLTVFVLSQFPHNCVLLVQTIDAYATFISSCALSIKIDICFQVTQTVAFFHSCLNPVLYVFVGERFRRDLVKTLKNLGCISQAQWVSFTRREGSLKLSSMLLETTSGALSF.

Over 1 to 46 the chain is Extracellular; that stretch reads MVPTEATSLILNPSDDYGYDGTPPMEYDTNLTDYFCEKSHVRQFAG. An N-linked (GlcNAc...) asparagine glycan is attached at asparagine 30. 2 cysteine pairs are disulfide-bonded: cysteine 36–cysteine 287 and cysteine 117–cysteine 196. A helical transmembrane segment spans residues 47–72; it reads HFLPPLYWLVFIVGAVGNSLVILVYW. At 73–83 the chain is on the cytoplasmic side; the sequence is YCTRVKTMTDM. The helical transmembrane segment at 84-107 threads the bilayer; it reads FLLNLAIADLLFLTTLPFWAIAAA. At 108 to 118 the chain is on the extracellular side; sequence DQWKFQTFMCK. The helical transmembrane segment at 119-148 threads the bilayer; the sequence is VVNSMYKMNFYSCVLLIMCISVDRYIAIAQ. Residues 149–157 lie on the Cytoplasmic side of the membrane; sequence AMRAQMWRQ. The helical transmembrane segment at 158–183 threads the bilayer; sequence KRLLYSKMVCFTIWVMAAALCLPELL. Over 184 to 206 the chain is Extracellular; that stretch reads YSQVKEEHGTAICTVVYSSNEST. The N-linked (GlcNAc...) asparagine glycan is linked to asparagine 203. A helical membrane pass occupies residues 207–241; the sequence is KLKSAVLTLKVTLGFFLPFVVMACCYAIIIHTLIR. Over 242-246 the chain is Cytoplasmic; it reads AKKSS. The chain crosses the membrane as a helical span at residues 247–281; that stretch reads KHKALKVTITVLTVFVLSQFPHNCVLLVQTIDAYA. Over 282-288 the chain is Extracellular; the sequence is TFISSCA. Residues 289–319 form a helical membrane-spanning segment; the sequence is LSIKIDICFQVTQTVAFFHSCLNPVLYVFVG. The Cytoplasmic segment spans residues 320–367; it reads ERFRRDLVKTLKNLGCISQAQWVSFTRREGSLKLSSMLLETTSGALSF.

It belongs to the G-protein coupled receptor 1 family.

The protein localises to the cell membrane. In terms of biological role, receptor for chemokine SCYA25/TECK. Subsequently transduces a signal by increasing the intracellular calcium ions level. This is C-C chemokine receptor type 9 (CCR9) from Ovis aries (Sheep).